Reading from the N-terminus, the 264-residue chain is Undecaprenyl-diphosphatase (264 aa).

8 helical membrane passes run 7–27, 39–59, 89–109, 112–132, 145–165, 182–202, 212–232, and 244–264; these read VVIL…SSGH, LPIV…MIYY, ILLI…IEMF, LFTL…LFLL, ILLA…PGIS, SESF…SLLL, MLFS…VGLF, and SKLY…YFLF.

It belongs to the UppP family.

The protein localises to the cell inner membrane. It carries out the reaction di-trans,octa-cis-undecaprenyl diphosphate + H2O = di-trans,octa-cis-undecaprenyl phosphate + phosphate + H(+). In terms of biological role, catalyzes the dephosphorylation of undecaprenyl diphosphate (UPP). Confers resistance to bacitracin. In Borrelia hermsii (strain HS1 / DAH), this protein is Undecaprenyl-diphosphatase.